Here is a 775-residue protein sequence, read N- to C-terminus: Suppressor of glycerol defect protein 1 (775 aa).

Basic residues-rich tracts occupy residues 1–11 (MRPIKKSRSLK) and 28–49 (RRGKRNHNLPHREKRKFARISR). Disordered stretches follow at residues 1–101 (MRPI…LLDP) and 152–253 (IDDI…GGDK). 3 stretches are compositionally biased toward basic and acidic residues: residues 52–79 (NGYENRKITEEGDSKSSELNDDYLDAHR), 177–193 (TGDHGSVDELESEREGN), and 209–223 (DEFHQPETKPIRMDP). An MIF4G domain is found at 262-463 (RRKLQGSLNK…ESITNLKENK (202 aa)). The MI domain maps to 565–689 (TLRTSIFVAL…PLTILKHVDF (125 aa)).

This sequence belongs to the CWC22 family.

The protein resides in the nucleus. It is found in the nucleolus. Its function is as follows. Involved in osmoregulatory glycerol response. In Schizosaccharomyces pombe (strain 972 / ATCC 24843) (Fission yeast), this protein is Suppressor of glycerol defect protein 1 (sgd1).